The following is a 275-amino-acid chain: Exosome complex component Rrp42 (275 aa).

Belongs to the RNase PH family. Rrp42 subfamily. Component of the archaeal exosome complex. Forms a hexameric ring-like arrangement composed of 3 Rrp41-Rrp42 heterodimers. The hexameric ring associates with a trimer of Rrp4 and/or Csl4 subunits.

The protein resides in the cytoplasm. Non-catalytic component of the exosome, which is a complex involved in RNA degradation. Contributes to the structuring of the Rrp41 active site. This Saccharolobus islandicus (strain M.16.27) (Sulfolobus islandicus) protein is Exosome complex component Rrp42.